A 132-amino-acid polypeptide reads, in one-letter code: D-ribose pyranase (132 aa).

Catalysis depends on histidine 20, which acts as the Proton donor. Residues aspartate 28, histidine 98, and 121–123 each bind substrate; that span reads YSN.

The protein belongs to the RbsD / FucU family. RbsD subfamily. As to quaternary structure, homodecamer.

It localises to the cytoplasm. The catalysed reaction is beta-D-ribopyranose = beta-D-ribofuranose. Its pathway is carbohydrate metabolism; D-ribose degradation; D-ribose 5-phosphate from beta-D-ribopyranose: step 1/2. Catalyzes the interconversion of beta-pyran and beta-furan forms of D-ribose. This is D-ribose pyranase from Kosmotoga olearia (strain ATCC BAA-1733 / DSM 21960 / TBF 19.5.1).